The sequence spans 427 residues: Glutamate-1-semialdehyde 2,1-aminomutase (427 aa).

Position 267 is an N6-(pyridoxal phosphate)lysine (Lys267).

This sequence belongs to the class-III pyridoxal-phosphate-dependent aminotransferase family. HemL subfamily. Homodimer. It depends on pyridoxal 5'-phosphate as a cofactor.

The protein localises to the cytoplasm. The enzyme catalyses (S)-4-amino-5-oxopentanoate = 5-aminolevulinate. It participates in porphyrin-containing compound metabolism; protoporphyrin-IX biosynthesis; 5-aminolevulinate from L-glutamyl-tRNA(Glu): step 2/2. This chain is Glutamate-1-semialdehyde 2,1-aminomutase, found in Citrifermentans bemidjiense (strain ATCC BAA-1014 / DSM 16622 / JCM 12645 / Bem) (Geobacter bemidjiensis).